Consider the following 159-residue polypeptide: RNA pyrophosphohydrolase (159 aa).

Residues 6-149 (GFRPNVGIIL…KREVYRRALK (144 aa)) enclose the Nudix hydrolase domain. The short motif at 38–59 (GGINPDETPEDALYRELNEEVG) is the Nudix box element.

Belongs to the Nudix hydrolase family. RppH subfamily. A divalent metal cation serves as cofactor.

Functionally, accelerates the degradation of transcripts by removing pyrophosphate from the 5'-end of triphosphorylated RNA, leading to a more labile monophosphorylated state that can stimulate subsequent ribonuclease cleavage. This Pseudomonas fluorescens (strain ATCC BAA-477 / NRRL B-23932 / Pf-5) protein is RNA pyrophosphohydrolase.